Reading from the N-terminus, the 465-residue chain is ATP synthase subunit beta (465 aa).

Residue 152–159 (GGAGVGKT) coordinates ATP.

It belongs to the ATPase alpha/beta chains family. As to quaternary structure, F-type ATPases have 2 components, CF(1) - the catalytic core - and CF(0) - the membrane proton channel. CF(1) has five subunits: alpha(3), beta(3), gamma(1), delta(1), epsilon(1). CF(0) has three main subunits: a(1), b(2) and c(9-12). The alpha and beta chains form an alternating ring which encloses part of the gamma chain. CF(1) is attached to CF(0) by a central stalk formed by the gamma and epsilon chains, while a peripheral stalk is formed by the delta and b chains.

The protein localises to the cell inner membrane. It carries out the reaction ATP + H2O + 4 H(+)(in) = ADP + phosphate + 5 H(+)(out). Its function is as follows. Produces ATP from ADP in the presence of a proton gradient across the membrane. The catalytic sites are hosted primarily by the beta subunits. The polypeptide is ATP synthase subunit beta (Campylobacter jejuni subsp. jejuni serotype O:6 (strain 81116 / NCTC 11828)).